Consider the following 201-residue polypeptide: dCTP deaminase, dUMP-forming (201 aa).

Residues 101–106, Asp-119, 127–129, Gln-148, Tyr-162, and Gln-174 contribute to the dCTP site; these read KSSLGR and TLE. Glu-129 functions as the Proton donor/acceptor in the catalytic mechanism.

This sequence belongs to the dCTP deaminase family. As to quaternary structure, homotrimer.

The catalysed reaction is dCTP + 2 H2O = dUMP + NH4(+) + diphosphate. It functions in the pathway pyrimidine metabolism; dUMP biosynthesis; dUMP from dCTP: step 1/1. In terms of biological role, bifunctional enzyme that catalyzes both the deamination of dCTP to dUTP and the hydrolysis of dUTP to dUMP without releasing the toxic dUTP intermediate. The chain is dCTP deaminase, dUMP-forming from Parafrankia sp. (strain EAN1pec).